Reading from the N-terminus, the 688-residue chain is Sodium channel and clathrin linker 1 (688 aa).

N-acetylalanine is present on Ala-2. The stretch at 69–673 (ELNGQLKYYQ…SASQQLSVIT (605 aa)) forms a coiled coil. Phosphoserine is present on Ser-681.

As to quaternary structure, interacts with SCN10A and clathrin. Identified in a complex containing SCN10A, clathrin and SCLT1.

The protein resides in the cytoplasm. It localises to the cytoskeleton. It is found in the microtubule organizing center. Its subcellular location is the centrosome. The protein localises to the centriole. Adapter protein that links SCN10A to clathrin. Regulates SCN10A channel activity, possibly by promoting channel internalization. The polypeptide is Sodium channel and clathrin linker 1 (SCLT1) (Homo sapiens (Human)).